The sequence spans 91 residues: DNA-binding protein HU (91 aa).

The protein belongs to the bacterial histone-like protein family.

In terms of biological role, histone-like DNA-binding protein which is capable of wrapping DNA to stabilize it, and thus to prevent its denaturation under extreme environmental conditions. This chain is DNA-binding protein HU (hup), found in Clostridium pasteurianum.